The primary structure comprises 271 residues: MSVIAPSFDMANILTELSSFLGALSLGCWVVLLIPQLLENYKNQSGESISDLFLIIWLIGDFFNVLGSIYGNVSSTVLVLSFYYIVSDSTLLMQIYYYRWKAARRIASREHEPLLQSRSLEEGLHAPIGKQQIWWDRLSTRQQFGVMGCVVIVSTIVGNLIISSASSDKSDDDLNAWPFTAGCISSVLYFCARIPQIIKNHKAKSTEGLSIIFFVLASVGNTSYAFSILVFPASDYLNYTYANLPWILGAFSTIFLDIYIFYQFIKYRNHY.

Residues 14–80 (LTELSSFLGA…GNVSSTVLVL (67 aa)) form the PQ-loop 1 domain. 3 helical membrane passes run 17–37 (LSSF…IPQL), 49–69 (ISDL…LGSI), and 77–97 (VLVL…QIYY). S119 is subject to Phosphoserine. Transmembrane regions (helical) follow at residues 144-164 (FGVM…IISS), 178-198 (PFTA…PQII), 211-231 (IIFF…ILVF), and 245-265 (PWIL…YQFI). Residues 185-239 (SSVLYFCARIPQIIKNHKAKSTEGLSIIFFVLASVGNTSYAFSILVFPASDYLNY) form the PQ-loop 2 domain.

It belongs to the laat-1 family.

The protein resides in the vacuole membrane. The enzyme catalyses L-histidine(out) + L-arginine(in) = L-histidine(in) + L-arginine(out). Its function is as follows. Amino acid transporter that moves basic amino acids across the vacuolar membrane. Appears to function as an arginine/histidine antiporter. The chain is Vacuolar arginine/histidine antiporter stm1 (stm1) from Schizosaccharomyces pombe (strain 972 / ATCC 24843) (Fission yeast).